Here is a 956-residue protein sequence, read N- to C-terminus: MAM domain-containing glycosylphosphatidylinositol anchor protein 2 (956 aa).

The signal sequence occupies residues 1 to 25; that stretch reads MDLLYGLVWLLTVLLEGISGQGVYA. 2 Ig-like domains span residues 27 to 127 and 134 to 232; these read PTVR…IRVD and PVVT…KMVS. 2 disulfides stabilise this stretch: C62/C110 and C159/C216. 3 N-linked (GlcNAc...) asparagine glycosylation sites follow: N92, N213, and N237. 4 Ig-like domains span residues 242–328, 340–436, 442–533, and 540–627; these read PSIK…NIIV, PDPY…VNIS, PNLT…ALVQ, and PAVE…FLVT. 2 cysteine pairs are disulfide-bonded: C264-C310 and C359-C417. N434, N443, N504, N610, and N703 each carry an N-linked (GlcNAc...) asparagine glycan. Intrachain disulfides connect C465-C515 and C561-C611. Residues 638–739 enclose the Fibronectin type-III domain; it reads DTYNPVWQNR…IRVIKYSAPV (102 aa). The MAM domain occupies 746–921; sequence FHCGFEDGNI…VSIAEGECAK (176 aa). A lipid anchor (GPI-anchor amidated aspartate) is attached at D931. The propeptide at 932-956 is removed in mature form; the sequence is GAVGILVHIWLFPIIVLISILSPRR.

In terms of assembly, interacts (through the Ig-like domains) with NLGN2. In terms of tissue distribution, detected in Leydig cells, syncytiotrophoblast, duodenal villi epithelial cells and neutrophils from kidney and cutaneous squamous cell carcinoma (at protein level).

It is found in the cell membrane. May be involved in cell-cell interactions. This is MAM domain-containing glycosylphosphatidylinositol anchor protein 2 (MDGA2) from Homo sapiens (Human).